Reading from the N-terminus, the 112-residue chain is Small ribosomal subunit protein uS11c (112 aa).

The protein belongs to the universal ribosomal protein uS11 family. As to quaternary structure, part of the 30S ribosomal subunit.

The protein localises to the plastid. The sequence is that of Small ribosomal subunit protein uS11c from Euglena longa (Euglenophycean alga).